The following is a 169-amino-acid chain: uncharacterized protein (169 aa).

2 disordered regions span residues Val-32–Pro-53 and Val-148–Ala-169.

This is an uncharacterized protein from Homo sapiens (Human).